The following is a 41-amino-acid chain: Large ribosomal subunit protein bL36 (41 aa).

Positions 1-21 (MKIRNSLKSLRGRHRDNQLVR) are disordered.

It belongs to the bacterial ribosomal protein bL36 family.

This Methylobacterium sp. (strain 4-46) protein is Large ribosomal subunit protein bL36.